Consider the following 1167-residue polypeptide: Pesticidal crystal protein Cry21Aa (1167 aa).

It belongs to the delta endotoxin family.

In terms of biological role, endotoxin with nematicidal activity. The polypeptide is Pesticidal crystal protein Cry21Aa (cry21Aa) (Bacillus thuringiensis).